We begin with the raw amino-acid sequence, 367 residues long: DNA polymerase IV (367 aa).

The 185-residue stretch at 14 to 198 (IIHIDMDAFF…LPIAKFHGVG (185 aa)) folds into the UmuC domain. Mg(2+)-binding residues include aspartate 18 and aspartate 116. Glutamate 117 is an active-site residue.

It belongs to the DNA polymerase type-Y family. In terms of assembly, monomer. Mg(2+) serves as cofactor.

It is found in the cytoplasm. The enzyme catalyses DNA(n) + a 2'-deoxyribonucleoside 5'-triphosphate = DNA(n+1) + diphosphate. In terms of biological role, poorly processive, error-prone DNA polymerase involved in untargeted mutagenesis. Copies undamaged DNA at stalled replication forks, which arise in vivo from mismatched or misaligned primer ends. These misaligned primers can be extended by PolIV. Exhibits no 3'-5' exonuclease (proofreading) activity. May be involved in translesional synthesis, in conjunction with the beta clamp from PolIII. The polypeptide is DNA polymerase IV (Streptococcus thermophilus (strain ATCC BAA-491 / LMD-9)).